The primary structure comprises 553 residues: Putative transport protein YidE (553 aa).

Transmembrane regions (helical) follow at residues 4–24, 28–48, 65–85, 95–115, and 158–178; these read IALTVSILALVAVVGLFIGNV, GVGLGIGGVLFGGIIVGHFVS, FGLILFVYTIGIQVGPGFFAS, LFAVLIVIIGGLVTAILHKLF, and MSYAMAYPFGICGILFTMWML. RCK C-terminal domains follow at residues 191–276 and 279–361; these read QQHE…VIGQ and DTSL…VLGN. 6 helical membrane passes run 371–391, 393–413, 439–459, 464–484, 493–513, and 533–553; these read MLPVFIGIGLGVLLGSIPVFV, GFPAALKLGLAGGPLIMALIL, IVLFLSVVGLKSGGDFIHTLV, LSWIGYGALITAVPLITVGIL, YLTMCGMLAGSMTDPPALAFA, and LVMFLRIITPQLLAVLFWSIG.

It belongs to the AAE transporter (TC 2.A.81) family. YidE subfamily.

It is found in the cell membrane. The sequence is that of Putative transport protein YidE from Escherichia coli O6:K15:H31 (strain 536 / UPEC).